Reading from the N-terminus, the 383-residue chain is Cytochrome b (383 aa).

The next 4 helical transmembrane spans lie at 32-52 (FGSLLAVCLVIQILTGCFLAM), 76-98 (WLIRYTHANVASFFFIFVYCHIA), 113-133 (TWSIGVIILILMMAIAFLGYV), and 179-199 (FFSLHYILPFLLAALAVAHMI). Heme b is bound by residues H82 and H96. Heme b is bound by residues H183 and H197. H202 contributes to the a ubiquinone binding site. A run of 4 helical transmembrane segments spans residues 225 to 245 (FIFKDLVTIFAFLLVLSIFVC), 289 to 309 (LLGVIAMFGSLLILLVLPLTD), 321 to 341 (LMKLSFWFFVVDFIILMWIGA), and 348 to 368 (YLEVGQIATAFYFAWFVFIVP).

Belongs to the cytochrome b family. In terms of assembly, fungal cytochrome b-c1 complex contains 10 subunits; 3 respiratory subunits, 2 core proteins and 5 low-molecular weight proteins. Cytochrome b-c1 complex is a homodimer. Heme b serves as cofactor.

The protein resides in the mitochondrion inner membrane. Component of the ubiquinol-cytochrome c reductase complex (complex III or cytochrome b-c1 complex) that is part of the mitochondrial respiratory chain. The b-c1 complex mediates electron transfer from ubiquinol to cytochrome c. Contributes to the generation of a proton gradient across the mitochondrial membrane that is then used for ATP synthesis. The chain is Cytochrome b (cob) from Schizophyllum commune (Split gill fungus).